The sequence spans 407 residues: Elongation factor Tu (407 aa).

In terms of domain architecture, tr-type G spans 10–217; that stretch reads KPHVNVGTIG…ALDSYIPEPE (208 aa). The G1 stretch occupies residues 19 to 26; sequence GHVDHGKT. 19–26 contributes to the GTP binding site; the sequence is GHVDHGKT. Threonine 26 is a Mg(2+) binding site. The interval 60–64 is G2; it reads GITIA. Residues 81 to 84 are G3; that stretch reads DCPG. GTP contacts are provided by residues 81-85 and 136-139; these read DCPGH and NKAD. Positions 136 to 139 are G4; sequence NKAD. The segment at 184-186 is G5; sequence SAL.

It belongs to the TRAFAC class translation factor GTPase superfamily. Classic translation factor GTPase family. EF-Tu/EF-1A subfamily. Monomer.

The protein resides in the cytoplasm. The enzyme catalyses GTP + H2O = GDP + phosphate + H(+). Its function is as follows. GTP hydrolase that promotes the GTP-dependent binding of aminoacyl-tRNA to the A-site of ribosomes during protein biosynthesis. The chain is Elongation factor Tu from Saccharophagus degradans (strain 2-40 / ATCC 43961 / DSM 17024).